Here is a 197-residue protein sequence, read N- to C-terminus: Adenylate kinase (197 aa).

An ATP-binding site is contributed by 16-21 (GAGKGT). The tract at residues 36–65 (STGDILRDHVARGTALGQRVKPILDAGQLV) is NMP. Residues threonine 37, arginine 42, 63–65 (QLV), 90–93 (GFPR), and glutamine 97 each bind AMP. The segment at 131-147 (ERGRQAALRGEPVRSDD) is LID. Residue arginine 132 participates in ATP binding. The AMP site is built by arginine 144 and arginine 155. Position 183 (glycine 183) interacts with ATP.

The protein belongs to the adenylate kinase family. Monomer.

The protein resides in the cytoplasm. The catalysed reaction is AMP + ATP = 2 ADP. The protein operates within purine metabolism; AMP biosynthesis via salvage pathway; AMP from ADP: step 1/1. Functionally, catalyzes the reversible transfer of the terminal phosphate group between ATP and AMP. Plays an important role in cellular energy homeostasis and in adenine nucleotide metabolism. The sequence is that of Adenylate kinase from Deinococcus geothermalis (strain DSM 11300 / CIP 105573 / AG-3a).